Consider the following 185-residue polypeptide: Peptide methionine sulfoxide reductase MsrA (185 aa).

Cys-12 is a catalytic residue.

This sequence belongs to the MsrA Met sulfoxide reductase family.

It catalyses the reaction L-methionyl-[protein] + [thioredoxin]-disulfide + H2O = L-methionyl-(S)-S-oxide-[protein] + [thioredoxin]-dithiol. The enzyme catalyses [thioredoxin]-disulfide + L-methionine + H2O = L-methionine (S)-S-oxide + [thioredoxin]-dithiol. Its function is as follows. Has an important function as a repair enzyme for proteins that have been inactivated by oxidation. Catalyzes the reversible oxidation-reduction of methionine sulfoxide in proteins to methionine. The polypeptide is Peptide methionine sulfoxide reductase MsrA (Granulibacter bethesdensis (strain ATCC BAA-1260 / CGDNIH1)).